Reading from the N-terminus, the 292-residue chain is MSPREIVLKETNQIDFISNQSIFDISPISGWKPFAPTDQILGIFIVFVLLLTFFIFYKLKLKKADSLKNNSYFLLLFQMLFVWVQDTTADLLGEENKKFAPYFLMLLLYIVSSNLVSLLGGISPPTSSLTFTFSLGLATFIGIVVMGIRYQRWNFFKEFAFGITVKGKKYSTFIPNPFSILSGFAPLFSISLRLWGNILAGTVILALFYNFWIFIFSSINNQPLALSLGTVFAGLITPVLHIYFDVIAGVLQGYVFVMLTYNYWAKMRNQGLENNNASELHFKGIKVIQENI.

7 helical membrane passes run 39 to 59, 73 to 93, 102 to 122, 128 to 148, 172 to 192, 196 to 216, and 231 to 251; these read QILG…FYKL, FLLL…DLLG, YFLM…LGGI, SLTF…VMGI, TFIP…SISL, GNIL…IFIF, and VFAG…AGVL.

This sequence belongs to the ATPase A chain family. In terms of assembly, F-type ATPases have 2 components, CF(1) - the catalytic core - and CF(0) - the membrane proton channel. CF(1) has five subunits: alpha(3), beta(3), gamma(1), delta(1), epsilon(1). CF(0) has three main subunits: a(1), b(2) and c(9-12). The alpha and beta chains form an alternating ring which encloses part of the gamma chain. CF(1) is attached to CF(0) by a central stalk formed by the gamma and epsilon chains, while a peripheral stalk is formed by the delta and b chains.

Its subcellular location is the cell membrane. Functionally, key component of the proton channel; it plays a direct role in the translocation of protons across the membrane. The chain is ATP synthase subunit a from Mycoplasma genitalium (strain ATCC 33530 / DSM 19775 / NCTC 10195 / G37) (Mycoplasmoides genitalium).